The sequence spans 226 residues: Pathogenesis-related protein R minor form (226 aa).

A signal peptide spans 1-25; sequence MNFLKSFPFYAFLCFGQYFVAVTHA. Cystine bridges form between Cys34-Cys225, Cys75-Cys85, Cys90-Cys96, Cys140-Cys214, Cys145-Cys197, Cys153-Cys163, Cys167-Cys176, and Cys177-Cys184.

Belongs to the thaumatin family.

Its subcellular location is the vacuole. The polypeptide is Pathogenesis-related protein R minor form (Nicotiana tabacum (Common tobacco)).